The sequence spans 143 residues: Lysozyme C (143 aa).

The signal sequence occupies residues 1 to 15 (MRCLLLLLLVPVPGA). The region spanning 16-143 (KVFERCEWAR…LSSYVAGCGV (128 aa)) is the C-type lysozyme domain. 4 cysteine pairs are disulfide-bonded: Cys21–Cys141, Cys45–Cys129, Cys79–Cys94, and Cys90–Cys108. Catalysis depends on residues Glu50 and Asp67.

This sequence belongs to the glycosyl hydrolase 22 family. As to quaternary structure, monomer.

The protein localises to the secreted. The catalysed reaction is Hydrolysis of (1-&gt;4)-beta-linkages between N-acetylmuramic acid and N-acetyl-D-glucosamine residues in a peptidoglycan and between N-acetyl-D-glucosamine residues in chitodextrins.. In terms of biological role, lysozymes have primarily a bacteriolytic function; those in tissues and body fluids are associated with the monocyte-macrophage system and enhance the activity of immunoagents. The sequence is that of Lysozyme C (lys) from Scophthalmus maximus (Turbot).